The primary structure comprises 758 residues: ATP-dependent RNA helicase dbp7 (758 aa).

Disordered stretches follow at residues 26–99 (GGTW…QPRQ) and 111–130 (PQKV…KPTN). The segment covering 35 to 45 (AKKIAKHHAKG) has biased composition (basic residues). The span at 84–99 (GKQQSHTHPHSNQPRQ) shows a compositional bias: polar residues. Over residues 111 to 127 (PQKVEEVKEEGHVEDAK) the composition is skewed to basic and acidic residues. Residues 138–167 (DTFTNLGLSPSLAAHLLTKLELKAPTAIQK) carry the Q motif motif. Residues 171-372 (SQLLKEEGDA…EISLKDAVHI (202 aa)) enclose the Helicase ATP-binding domain. 184-191 (AETGSGKT) provides a ligand contact to ATP. The DEAD box signature appears at 308–311 (DEGD). Residues 398–603 (QLKQSYAVVA…ALTRADANDI (206 aa)) enclose the Helicase C-terminal domain. Disordered stretches follow at residues 455-483 (KEDG…APAT) and 691-758 (VPGL…FNLA). Positions 696 to 709 (QGKEETKKDFKAER) are enriched in basic and acidic residues.

This sequence belongs to the DEAD box helicase family. DDX31/DBP7 subfamily.

The protein resides in the nucleus. It localises to the nucleolus. It catalyses the reaction ATP + H2O = ADP + phosphate + H(+). ATP-binding RNA helicase involved in the biogenesis of 60S ribosomal subunits and is required for the normal formation of 25S and 5.8S rRNAs. This Neosartorya fischeri (strain ATCC 1020 / DSM 3700 / CBS 544.65 / FGSC A1164 / JCM 1740 / NRRL 181 / WB 181) (Aspergillus fischerianus) protein is ATP-dependent RNA helicase dbp7 (dbp7).